Consider the following 201-residue polypeptide: Peptide deformylase (201 aa).

Residues 1-24 (MANHFSQLAKKSKTNGNSEKIAKE) form a disordered region. Residues C121 and H163 each coordinate Fe cation. Residue E164 is part of the active site. H167 contacts Fe cation.

The protein belongs to the polypeptide deformylase family. Requires Fe(2+) as cofactor.

It carries out the reaction N-terminal N-formyl-L-methionyl-[peptide] + H2O = N-terminal L-methionyl-[peptide] + formate. Functionally, removes the formyl group from the N-terminal Met of newly synthesized proteins. Requires at least a dipeptide for an efficient rate of reaction. N-terminal L-methionine is a prerequisite for activity but the enzyme has broad specificity at other positions. In Prochlorococcus marinus (strain MIT 9312), this protein is Peptide deformylase.